The chain runs to 907 residues: Protein translocase subunit SecA (907 aa).

ATP is bound by residues Q86, 104–108, and D511; that span reads GEGKT. Basic and acidic residues-rich tracts occupy residues 838–856 and 869–888; these read AQEEWKESMSEIKAEHESV and EEAPKVQQVKREGPKIKRND. The disordered stretch occupies residues 838-907; it reads AQEEWKESMS…YKQCHGKVVD (70 aa). The Zn(2+) site is built by C890, C892, C901, and H902. Positions 896–907 are enriched in basic residues; that stretch reads KKYKQCHGKVVD.

The protein belongs to the SecA family. Monomer and homodimer. Part of the essential Sec protein translocation apparatus which comprises SecA, SecYEG and auxiliary proteins SecDF-YajC and YidC. Requires Zn(2+) as cofactor.

The protein resides in the cell inner membrane. Its subcellular location is the cytoplasm. It carries out the reaction ATP + H2O + cellular proteinSide 1 = ADP + phosphate + cellular proteinSide 2.. Functionally, part of the Sec protein translocase complex. Interacts with the SecYEG preprotein conducting channel. Has a central role in coupling the hydrolysis of ATP to the transfer of proteins into and across the cell membrane, serving both as a receptor for the preprotein-SecB complex and as an ATP-driven molecular motor driving the stepwise translocation of polypeptide chains across the membrane. This Francisella philomiragia subsp. philomiragia (strain ATCC 25017 / CCUG 19701 / FSC 153 / O#319-036) protein is Protein translocase subunit SecA.